Consider the following 380-residue polypeptide: 3-dehydroquinate synthase (380 aa).

It belongs to the archaeal-type DHQ synthase family.

The catalysed reaction is 2-amino-2,3,7-trideoxy-D-lyxo-hept-6-ulosonate + NAD(+) + H2O = 3-dehydroquinate + NH4(+) + NADH + H(+). In terms of biological role, catalyzes the oxidative deamination and cyclization of 2-amino-3,7-dideoxy-D-threo-hept-6-ulosonic acid (ADH) to yield 3-dehydroquinate (DHQ), which is fed into the canonical shikimic pathway of aromatic amino acid biosynthesis. This Methanosarcina barkeri (strain Fusaro / DSM 804) protein is 3-dehydroquinate synthase.